The sequence spans 316 residues: Ribosomal RNA small subunit methyltransferase H (316 aa).

Residues Ala-35–His-37, Asp-55, Phe-84, Asp-105, and Gln-112 each bind S-adenosyl-L-methionine.

Belongs to the methyltransferase superfamily. RsmH family.

The protein localises to the cytoplasm. The enzyme catalyses cytidine(1402) in 16S rRNA + S-adenosyl-L-methionine = N(4)-methylcytidine(1402) in 16S rRNA + S-adenosyl-L-homocysteine + H(+). Its function is as follows. Specifically methylates the N4 position of cytidine in position 1402 (C1402) of 16S rRNA. In Streptococcus mutans serotype c (strain ATCC 700610 / UA159), this protein is Ribosomal RNA small subunit methyltransferase H.